We begin with the raw amino-acid sequence, 217 residues long: Imidazole glycerol phosphate synthase subunit HisH (217 aa).

A Glutamine amidotransferase type-1 domain is found at 1–212 (MLAILDYKAG…YEYCRQSRQE (212 aa)). Cysteine 79 acts as the Nucleophile in catalysis. Residues histidine 187 and glutamate 189 contribute to the active site.

In terms of assembly, heterodimer of HisH and HisF.

The protein resides in the cytoplasm. The catalysed reaction is 5-[(5-phospho-1-deoxy-D-ribulos-1-ylimino)methylamino]-1-(5-phospho-beta-D-ribosyl)imidazole-4-carboxamide + L-glutamine = D-erythro-1-(imidazol-4-yl)glycerol 3-phosphate + 5-amino-1-(5-phospho-beta-D-ribosyl)imidazole-4-carboxamide + L-glutamate + H(+). The enzyme catalyses L-glutamine + H2O = L-glutamate + NH4(+). The protein operates within amino-acid biosynthesis; L-histidine biosynthesis; L-histidine from 5-phospho-alpha-D-ribose 1-diphosphate: step 5/9. Its function is as follows. IGPS catalyzes the conversion of PRFAR and glutamine to IGP, AICAR and glutamate. The HisH subunit catalyzes the hydrolysis of glutamine to glutamate and ammonia as part of the synthesis of IGP and AICAR. The resulting ammonia molecule is channeled to the active site of HisF. The protein is Imidazole glycerol phosphate synthase subunit HisH of Desulfovibrio desulfuricans (strain ATCC 27774 / DSM 6949 / MB).